The primary structure comprises 1041 residues: Pre-mRNA-splicing factor ATP-dependent RNA helicase DHX16 (1041 aa).

2 disordered regions span residues 101 to 207 (EDSE…AYEE) and 371 to 391 (LQGD…QKES). A phosphoserine mark is found at S103, S106, and S107. The span at 119–130 (QKKRKKRKHLRK) shows a compositional bias: basic residues. Position 160 is a phosphoserine (S160). A compositionally biased stretch (basic and acidic residues) spans 166 to 207 (RTERERLQDLEERDAFAERVRQRDKDRTRNVLERSDKKAYEE). Residues 381–391 (PTSTQAQQKES) show a composition bias toward polar residues. The Helicase ATP-binding domain maps to 409–573 (LAAIANHQVL…FDDAPVFRIP (165 aa)). Position 422–429 (422–429 (GETGSGKT)) interacts with ATP. Positions 520–523 (DEAH) match the DEAH box motif. A Helicase C-terminal domain is found at 598-771 (SVLQIHVTQP…NVVLLLKSLG (174 aa)). T712 is subject to Phosphothreonine.

The protein belongs to the DEAD box helicase family. DEAH subfamily. DDX16/PRP8 sub-subfamily. Component of pre-catalytic spliceosome complexes. Component of the minor spliceosome, which splices U12-type introns. Interacts with GPKOW. Interacts with TRIM6. Interacts with RIGI. As to expression, expressed in the spleen, thyroid and testis. Also expressed in the brain and cerebellum.

It is found in the nucleus. It localises to the nucleoplasm. The protein resides in the cytoplasm. The catalysed reaction is ATP + H2O = ADP + phosphate + H(+). Required for pre-mRNA splicing as a component of the spliceosome. Contributes to pre-mRNA splicing after spliceosome formation and prior to the first transesterification reaction. As a component of the minor spliceosome, involved in the splicing of U12-type introns in pre-mRNAs. Also plays a role in innate antiviral response by acting as a pattern recognition receptor sensing splicing signals in viral RNA. Mechanistically, TRIM6 promotes the interaction between unanchored 'Lys-48'-polyubiquitin chains and DHX16, leading to DHX16 interaction with RIGI and ssRNA to amplify RIGI-dependent innate antiviral immune responses. This chain is Pre-mRNA-splicing factor ATP-dependent RNA helicase DHX16 (DHX16), found in Homo sapiens (Human).